Consider the following 463-residue polypeptide: NADH dehydrogenase [ubiquinone] iron-sulfur protein 2, mitochondrial (463 aa).

A mitochondrion-targeting transit peptide spans 1-33; sequence MAALRALRCLRGVGAPVLRPGSGIRLPSQPSRG. At Lys62 the chain carries N6-acetyllysine. Residue Arg118 is modified to Symmetric dimethylarginine. 3 residues coordinate [4Fe-4S] cluster: Cys326, Cys332, and Cys347.

This sequence belongs to the complex I 49 kDa subunit family. As to quaternary structure, core subunit of respiratory chain NADH dehydrogenase (Complex I) which is composed of 45 different subunits. Component of the iron-sulfur (IP) fragment of the enzyme. Interacts with NDUFAF3. Interacts with NDUFAF7. Interacts with CERS2. [4Fe-4S] cluster serves as cofactor. Post-translationally, dimethylation at Arg-118 by NDUFAF7 takes place after NDUFS2 assembles into the complex I, leading to stabilize the early intermediate complex.

The protein localises to the mitochondrion inner membrane. It carries out the reaction a ubiquinone + NADH + 5 H(+)(in) = a ubiquinol + NAD(+) + 4 H(+)(out). In terms of biological role, core subunit of the mitochondrial membrane respiratory chain NADH dehydrogenase (Complex I) which catalyzes electron transfer from NADH through the respiratory chain, using ubiquinone as an electron acceptor. Essential for the catalytic activity and assembly of complex I. Redox-sensitive, critical component of the oxygen-sensing pathway in the pulmonary vasculature which plays a key role in acute pulmonary oxygen-sensing and hypoxic pulmonary vasoconstriction. Plays an important role in carotid body sensing of hypoxia. Essential for glia-like neural stem and progenitor cell proliferation, differentiation and subsequent oligodendrocyte or neuronal maturation. The sequence is that of NADH dehydrogenase [ubiquinone] iron-sulfur protein 2, mitochondrial (Ndufs2) from Mus musculus (Mouse).